The following is a 241-amino-acid chain: Translation initiation factor IF-3 (241 aa).

Positions 193–203 (AAEKARQKAIQ) are enriched in basic and acidic residues. Positions 193-241 (AAEKARQKAIQEGRAAPAQDDTEDEEIEKLERELEEQDDEDDDEAEATE) are disordered. Residues 212–241 (DDTEDEEIEKLERELEEQDDEDDDEAEATE) are compositionally biased toward acidic residues.

It belongs to the IF-3 family. Monomer.

It is found in the cytoplasm. In terms of biological role, IF-3 binds to the 30S ribosomal subunit and shifts the equilibrium between 70S ribosomes and their 50S and 30S subunits in favor of the free subunits, thus enhancing the availability of 30S subunits on which protein synthesis initiation begins. This chain is Translation initiation factor IF-3, found in Sorangium cellulosum (strain So ce56) (Polyangium cellulosum (strain So ce56)).